Reading from the N-terminus, the 209-residue chain is Zinc finger SWIM domain-containing protein sws1 (209 aa).

Residues 1-30 are compositionally biased toward polar residues; that stretch reads MQQGHFTSNSYHSKTLNSSSLPVSSKFSHT. The tract at residues 1–33 is disordered; the sequence is MQQGHFTSNSYHSKTLNSSSLPVSSKFSHTNDP. The segment at 143–203 adopts an SWIM-type zinc-finger fold; it reads TTIDLKYWYC…HILAASILRA (61 aa).

As to quaternary structure, interacts with rdl1, rlp1 and srs2.

It is found in the cytoplasm. It localises to the nucleus. Its subcellular location is the nucleoplasm. In terms of biological role, involved in early stages of the homologous recombination repair (HRR) pathway of double-stranded DNA breaks arising during DNA replication or induced by DNA-damaging agents. This Schizosaccharomyces pombe (strain 972 / ATCC 24843) (Fission yeast) protein is Zinc finger SWIM domain-containing protein sws1 (sws1).